We begin with the raw amino-acid sequence, 269 residues long: Putative hydro-lyase M446_2125 (269 aa).

Belongs to the D-glutamate cyclase family.

The protein is Putative hydro-lyase M446_2125 of Methylobacterium sp. (strain 4-46).